The primary structure comprises 164 residues: R-phycoerythrin alpha chain (164 aa).

The (2R,3E)-phycoerythrobilin site is built by Cys82 and Cys139.

It belongs to the phycobiliprotein family. In terms of assembly, heterodimer of an alpha and a beta chain. Contains two covalently linked bilin chromophores.

Its subcellular location is the plastid. The protein resides in the chloroplast thylakoid membrane. Its function is as follows. Light-harvesting photosynthetic bile pigment-protein from the phycobiliprotein complex. This chain is R-phycoerythrin alpha chain (cpeA), found in Porphyra purpurea (Red seaweed).